A 235-amino-acid chain; its full sequence is 7-cyano-7-deazaguanine synthase (235 aa).

10–20 (FSGGQDSTTCL) is a binding site for ATP. Positions 198, 213, 216, and 219 each coordinate Zn(2+).

Belongs to the QueC family. It depends on Zn(2+) as a cofactor.

It catalyses the reaction 7-carboxy-7-deazaguanine + NH4(+) + ATP = 7-cyano-7-deazaguanine + ADP + phosphate + H2O + H(+). The protein operates within purine metabolism; 7-cyano-7-deazaguanine biosynthesis. Catalyzes the ATP-dependent conversion of 7-carboxy-7-deazaguanine (CDG) to 7-cyano-7-deazaguanine (preQ(0)). The sequence is that of 7-cyano-7-deazaguanine synthase from Paracidovorax citrulli (strain AAC00-1) (Acidovorax citrulli).